Consider the following 174-residue polypeptide: Variant surface antigen B (174 aa).

A signal peptide spans 1–29 (MKKSIFSKKLLVSFGSLVALASIPLIAIS). C30 carries the N-palmitoyl cysteine lipid modification. The S-diacylglycerol cysteine moiety is linked to residue C30. The tract at residues 32–174 (QTNTDKSQQP…SQDSGNGSTK (143 aa)) is disordered. Residues 38-49 (SQQPGSGSSTSG) show a composition bias toward low complexity. The segment covering 50–75 (GQSGTGLGSGTTTGGQSGTTTGGRSG) has biased composition (gly residues). Residues 76 to 97 (SGSSSSTTGGQTGTGSDSQDSG) show a composition bias toward low complexity. 7 tandem repeats follow at residues 88–99 (GTGSDSQDSGAK), 100–111 (GTGSDSQDSGAK), 112–123 (GTGSDSQDSGAK), 124–135 (GTGSDSQDSGAK), 136–147 (GTGSDSQDSGAK), 148–159 (GTGSDSQDSGAK), and 160–171 (GTGSDSQDSGNG). The tract at residues 88-171 (GTGSDSQDSG…GSDSQDSGNG (84 aa)) is 7 X 12 AA tandem repeats. The segment covering 102–174 (GSDSQDSGAK…SQDSGNGSTK (73 aa)) has biased composition (polar residues).

Its subcellular location is the cell membrane. Responsible for the antigenic diversity for host adaptation. This is Variant surface antigen B (vlpB) from Mesomycoplasma hyorhinis (Mycoplasma hyorhinis).